Here is a 609-residue protein sequence, read N- to C-terminus: Protein kinase PVPK-1 (609 aa).

Residues 1–19 (MESSVNGVDSLSEVQNSVS) are compositionally biased toward polar residues. 2 disordered regions span residues 1–51 (MESS…GHQT) and 80–100 (PTKLSSKQPPLDDSKGCEPNG). The 337-residue stretch at 229 to 565 (FRLLKKLGCG…ATEIKQHPFF (337 aa)) folds into the Protein kinase domain. Residues 235-243 (LGCGDIGSV) and Lys258 each bind ATP. The active-site Proton acceptor is Asp354. Positions 429–448 (GKSKKDKKSKPKNDMHNQVT) are disordered.

This sequence belongs to the protein kinase superfamily. Ser/Thr protein kinase family.

It catalyses the reaction L-seryl-[protein] + ATP = O-phospho-L-seryl-[protein] + ADP + H(+). The catalysed reaction is L-threonyl-[protein] + ATP = O-phospho-L-threonyl-[protein] + ADP + H(+). The sequence is that of Protein kinase PVPK-1 from Phaseolus vulgaris (Kidney bean).